The following is a 155-amino-acid chain: MFVKMIGWLVLFLFAHQTWAIEVAKDTNGGILNIAPEQLKRGKRLFNSHCSSCHVGGITKTNPNIGLDLESLSLATPPRNNLDALVDYMKNPTTYDGSESIAQIHPSIASSDIFPKMRDLSEDDLYAIAAHILTQPQIQAEKWGGGKIYYTKRSM.

Residues 1–20 (MFVKMIGWLVLFLFAHQTWA) form the signal peptide. Residues Cys-50, Cys-53, His-54, and His-105 each contribute to the heme c site.

Belongs to the cytochrome c family. PsbV subfamily. As to quaternary structure, PSII is composed of 1 copy each of membrane proteins PsbA, PsbB, PsbC, PsbD, PsbE, PsbF, PsbH, PsbI, PsbJ, PsbK, PsbL, PsbM, PsbT, PsbY, PsbZ, Psb30/Ycf12, at least 3 peripheral proteins of the oxygen-evolving complex and a large number of cofactors. It forms dimeric complexes. The extrinsic subunits in red algae are PsbO (OEC33), PsbQ', cytochrome c-550 and PsbU. Heme c is required as a cofactor.

It is found in the plastid. The protein resides in the chloroplast thylakoid membrane. In terms of biological role, one of the extrinsic, lumenal subunits of photosystem II (PSII). PSII is a light-driven water plastoquinone oxidoreductase, using light energy to abstract electrons from H(2)O, generating a proton gradient subsequently used for ATP formation. The extrinsic proteins stabilize the structure of photosystem II oxygen-evolving complex (OEC), the ion environment of oxygen evolution and protect the OEC against heat-induced inactivation. Unlike the T.vulcanus ortholog, it does not bind by itself to PSII, but requires all extrinsic members of the OEC. In Cyanidium caldarium (Red alga), this protein is Photosystem II extrinsic protein V.